The sequence spans 250 residues: 5-oxoprolinase subunit A 2 (250 aa).

It belongs to the LamB/PxpA family. In terms of assembly, forms a complex composed of PxpA, PxpB and PxpC.

It carries out the reaction 5-oxo-L-proline + ATP + 2 H2O = L-glutamate + ADP + phosphate + H(+). Catalyzes the cleavage of 5-oxoproline to form L-glutamate coupled to the hydrolysis of ATP to ADP and inorganic phosphate. The chain is 5-oxoprolinase subunit A 2 from Bordetella bronchiseptica (strain ATCC BAA-588 / NCTC 13252 / RB50) (Alcaligenes bronchisepticus).